A 510-amino-acid polypeptide reads, in one-letter code: Pyruvate kinase, cytosolic isozyme (510 aa).

Arginine 50 is a binding site for substrate. K(+)-binding residues include asparagine 52, serine 54, aspartate 84, and threonine 85. 52–55 (NFSH) provides a ligand contact to ATP. Residues arginine 91 and lysine 176 each contribute to the ATP site. Glutamate 242 lines the Mg(2+) pocket. The substrate site is built by glycine 265, aspartate 266, and threonine 298. Residue aspartate 266 coordinates Mg(2+).

Belongs to the pyruvate kinase family. In terms of assembly, homotetramer. Requires Mg(2+) as cofactor. The cofactor is K(+).

It is found in the cytoplasm. The enzyme catalyses pyruvate + ATP = phosphoenolpyruvate + ADP + H(+). Its pathway is carbohydrate degradation; glycolysis; pyruvate from D-glyceraldehyde 3-phosphate: step 5/5. The chain is Pyruvate kinase, cytosolic isozyme from Solanum tuberosum (Potato).